We begin with the raw amino-acid sequence, 530 residues long: Hyccin 2 (530 aa).

2 positions are modified to phosphothreonine: T30 and T306. Phosphoserine is present on residues S321 and S341. The interval 328-404 (RREGAEGLNG…SNESPRDSVV (77 aa)) is disordered. Residues 353-373 (SGASLSSQPHGTKPPSSSQRG) are compositionally biased toward polar residues. Phosphoserine is present on residues S430, S442, S444, and S491. The interval 502–530 (EGKELLSPGAPLTKQSRSPSFNMQLISQV) is disordered. Residues 514–530 (TKQSRSPSFNMQLISQV) show a composition bias toward polar residues.

Belongs to the Hyccin family. Component of a phosphatidylinositol 4-kinase (PI4K) complex, composed of PI4KA, EFR3 (EFR3A or EFR3B), TTC7 (TTC7A or TTC7B) and HYCC (HYCC1 or HYCC2). Expressed in the central nervous system. Expressed at much lower level in oligodendrocytes than in neurons.

Its subcellular location is the cytoplasm. The protein localises to the cytosol. The protein resides in the cell membrane. Component of a complex required to localize phosphatidylinositol 4-kinase (PI4K) to the plasma membrane. In Mus musculus (Mouse), this protein is Hyccin 2 (Hycc2).